Reading from the N-terminus, the 741-residue chain is Zinc transporter ZIP6 (741 aa).

The N-terminal stretch at 1–20 (MATNLSVIMILTFALWVTNP) is a signal peptide. Over 21 to 311 (LHELQSTAAF…PKTYSLQIAW (291 aa)) the chain is Extracellular. Asparagine 68 carries N-linked (GlcNAc...) asparagine glycosylation. The span at 95 to 111 (HDHERHSDHERHSDHER) shows a compositional bias: basic and acidic residues. Disordered stretches follow at residues 95–172 (HDHE…EVTS) and 189–213 (ETPK…EKSR). The segment covering 135–147 (DNSGKNPNTSQGK) has biased composition (polar residues). An N-linked (GlcNAc...) asparagine glycan is attached at asparagine 142. The span at 150 to 162 (RPAEHVNGRRNGK) shows a compositional bias: basic and acidic residues. The span at 163–172 (ESASSSEVTS) shows a compositional bias: low complexity. Polar residues predominate over residues 200-209 (INPSTPPSIT). N-linked (GlcNAc...) asparagine glycosylation is found at asparagine 226, asparagine 251, and asparagine 268. Residues 312–332 (LGGFIAISIISFLSLLGVILV) form a helical membrane-spanning segment. The Cytoplasmic segment spans residues 333–341 (PLMNRVFFK). Residues 342 to 362 (FLLSFLVALAVGTLSGDALLH) form a helical membrane-spanning segment. The Extracellular segment spans residues 363–409 (LLPHSHASHHHSHSHEEPAMEMKRGPLFSHLSAQNLEESSYFDSTWK). The helical transmembrane segment at 410-430 (GLTALGGLYFMFLVEHVLTLI) threads the bilayer. Residues 431-643 (KQFKDKKKKN…LKAGMTVKQA (213 aa)) are Cytoplasmic-facing. The tract at residues 434-494 (KDKKKKNQKK…QEPSPFDSQQ (61 aa)) is disordered. A coiled-coil region spans residues 450–475 (VESKKQLSKYESQLSTNEEKVDTGER). Phosphoserine occurs at positions 457 and 464. Residues 466–477 (NEEKVDTGERPE) show a composition bias toward basic and acidic residues. A compositionally biased stretch (polar residues) spans 481–494 (QADSQEPSPFDSQQ). A helical transmembrane segment spans residues 644–664 (VLYNALSAMLAYLGMATGIFI). Topologically, residues 665–672 (GHYAENVS) are extracellular. An N-linked (GlcNAc...) asparagine glycan is attached at asparagine 670. Residues 673-693 (MWIFALTAGLFMYVALVDMVP) traverse the membrane as a helical segment. Residues 694–710 (EMLHNDASDHGCSRWGY) lie on the Cytoplasmic side of the membrane. The chain crosses the membrane as a helical span at residues 711–731 (FFLQNAGILLGFGIMLLISIF). Over 732 to 741 (EHKIVFRINF) the chain is Extracellular.

The protein belongs to the ZIP transporter (TC 2.A.5) family. As to quaternary structure, interacts with SLC39A10; which triggers cells to undergo EMT and mitosis. Found in a complex with SLC39A6, SLC39A10 and with the 'Ser-727' phosphorylated form of STAT3 throughout mitosis. Found in a complex with SLC39A6, SLC39A10 and with NCAM1; this complex controls NCAM1 phosphorylation and integration into focal adhesion complexes during epithelial-to-mesenchymal transition (EMT). Found in a complex with SLC39A6, SLC39A10 and with GSK3B that controls NCAM1 phosphorylation. In terms of processing, cleaved on the N-terminus before locating to the plasma membrane. Post-translationally, N-glycosylated. Phosphorylated by ZAP70 in response to TCR stimulation leading to its activation. As to expression, expressed in the endothelial cells of the brain capillaries.

It is found in the cell membrane. It localises to the cell projection. The protein localises to the lamellipodium membrane. Its subcellular location is the membrane raft. The protein resides in the apical cell membrane. It catalyses the reaction Zn(2+)(in) = Zn(2+)(out). Its function is as follows. Zinc-influx transporter which plays a role in zinc homeostasis and in the induction of epithelial-to-mesenchymal transition (EMT). When associated with SLC39A10, the heterodimer formed by SLC39A10 and SLC39A6 mediates cellular zinc uptake to trigger cells to undergo epithelial- to-mesenchymal transition (EMT). The SLC39A10-SLC39A6 heterodimer also controls NCAM1 phosphorylation and its integration into focal adhesion complexes during EMT. Zinc influx inactivates GSK3B, enabling unphosphorylated SNAI1 in the nucleus to down-regulate adherence genes such as CDH1, causing loss of cell adherence. In addition, the SLC39A10-SLC39A6 heterodimer plays an essentiel role in initiating mitosis by importing zinc into cells to initiate a pathway resulting in the onset of mitosis. Participates in the T-cell receptor signaling regulation by mediating cellular zinc uptake into activated lymphocytes. Regulates the zinc influx necessary for proper meiotic progression to metaphase II (MII) that allows the oocyte-to-egg transition. The protein is Zinc transporter ZIP6 of Rattus norvegicus (Rat).